A 193-amino-acid chain; its full sequence is Orotate phosphoribosyltransferase (193 aa).

5-phospho-alpha-D-ribose 1-diphosphate is bound at residue 116–124 (EDVVTTGKS). Positions 120 and 148 each coordinate orotate.

The protein belongs to the purine/pyrimidine phosphoribosyltransferase family. PyrE subfamily. Homodimer. Requires Mg(2+) as cofactor.

The enzyme catalyses orotidine 5'-phosphate + diphosphate = orotate + 5-phospho-alpha-D-ribose 1-diphosphate. The protein operates within pyrimidine metabolism; UMP biosynthesis via de novo pathway; UMP from orotate: step 1/2. Functionally, catalyzes the transfer of a ribosyl phosphate group from 5-phosphoribose 1-diphosphate to orotate, leading to the formation of orotidine monophosphate (OMP). The protein is Orotate phosphoribosyltransferase of Clostridium tetani (strain Massachusetts / E88).